The following is a 660-amino-acid chain: Anoctamin-10 (660 aa).

Residues 1–207 lie on the Cytoplasmic side of the membrane; it reads MKVTLSALDT…DSIRGYFGET (207 aa). The chain crosses the membrane as a helical span at residues 208-228; it reads IALYFGFLEYFTFALIPMAVI. The Extracellular portion of the chain corresponds to 229 to 240; it reads GLPYYLFVWEDY. The chain crosses the membrane as a helical span at residues 241–261; sequence DKYVIFASFNLIWSTVILELW. At 262–316 the chain is on the cytoplasmic side; sequence KRGCANMTYRWGTLLMKRKFEEPRPGFHGVLGINSITGKEEPLYPSYKRQLRIYL. A helical membrane pass occupies residues 317–337; that stretch reads VSLPFVCLCLYFSLYVMMIYF. Residues 338-352 are Extracellular-facing; it reads DMEVWALGLHENSGS. Residues 353-373 traverse the membrane as a helical segment; the sequence is EWTSVLLYVPSIIYAIVIEIM. Residues 374 to 400 lie on the Cytoplasmic side of the membrane; it reads NRLYRYAAEFLTSWENHRLESAYQNHL. A helical transmembrane segment spans residues 401-421; that stretch reads ILKVLVFNFLNCFASLFYIAF. Residues 422-500 are Extracellular-facing; the sequence is VLKDMKLLRQ…YLGTFDDYLE (79 aa). A helical membrane pass occupies residues 501-521; sequence LFLQFGYVSLFSCVYPLAAAF. Topologically, residues 522-553 are cytoplasmic; it reads AVLNNFTEVNSDALKMCRVFKRPFSEPSANIG. A helical transmembrane segment spans residues 554–574; sequence VWQLAFETMSVISVVTNCALI. The Extracellular portion of the chain corresponds to 575–590; the sequence is GMSPQVNAVFPESKAD. The helical transmembrane segment at 591 to 611 threads the bilayer; that stretch reads LILIVVAVEHALLALKFILAF. The Cytoplasmic portion of the chain corresponds to 612–660; that stretch reads AIPDKPRHIQMKLARLEFESLEALKQQQMKLVTENLKEEPMESGKEKAT.

Belongs to the anoctamin family. In terms of tissue distribution, highly expressed in the brain. Intermediate levels in the retina and heart and low levels in the placenta, liver, lung, duodenum, kidney, testis and spleen. In brain areas, highest expression in the frontal and occipital cortices and in the cerebellum. Lower expression in the fetal brain than in the adult brain.

It localises to the cell membrane. Does not exhibit calcium-activated chloride channel (CaCC) activity. Can inhibit the activity of ANO1. This Homo sapiens (Human) protein is Anoctamin-10 (ANO10).